The primary structure comprises 20 residues: Truncated non-structural protein of 4.9 kDa (20 aa).

Belongs to the coronaviruses ns4.9 protein family.

The protein is Truncated non-structural protein of 4.9 kDa of Sus scrofa (Pig).